We begin with the raw amino-acid sequence, 245 residues long: 2,3-bisphosphoglycerate-dependent phosphoglycerate mutase (245 aa).

Substrate contacts are provided by residues R8 to N15, T21 to G22, R60, E87 to Y90, K98, R114 to R115, and G183 to N184. The active-site Tele-phosphohistidine intermediate is the H9. Residue E87 is the Proton donor/acceptor of the active site.

It belongs to the phosphoglycerate mutase family. BPG-dependent PGAM subfamily.

The catalysed reaction is (2R)-2-phosphoglycerate = (2R)-3-phosphoglycerate. It participates in carbohydrate degradation; glycolysis; pyruvate from D-glyceraldehyde 3-phosphate: step 3/5. Functionally, catalyzes the interconversion of 2-phosphoglycerate and 3-phosphoglycerate. The sequence is that of 2,3-bisphosphoglycerate-dependent phosphoglycerate mutase from Bacillus thuringiensis (strain Al Hakam).